Here is a 453-residue protein sequence, read N- to C-terminus: ACT domain-containing protein ACR3 (453 aa).

4 ACT domains span residues 37–112 (LVKV…SASQ), 130–212 (SIEI…KFAR), 266–341 (VINV…RVSE), and 344–423 (SLEL…VPSR).

As to expression, expressed in roots, cotyledons, rosette and cauline leaves, sepals, style, and pedicels and tips of young developing siliques.

In terms of biological role, may bind amino acids. The polypeptide is ACT domain-containing protein ACR3 (Arabidopsis thaliana (Mouse-ear cress)).